Consider the following 85-residue polypeptide: Translation initiation factor IF-1 1 (85 aa).

The region spanning 1-72 is the S1-like domain; the sequence is MSKEDLIEMQ…NKGRLTFRHI (72 aa).

This sequence belongs to the IF-1 family. Component of the 30S ribosomal translation pre-initiation complex which assembles on the 30S ribosome in the order IF-2 and IF-3, IF-1 and N-formylmethionyl-tRNA(fMet); mRNA recruitment can occur at any time during PIC assembly.

It is found in the cytoplasm. Its function is as follows. One of the essential components for the initiation of protein synthesis. Stabilizes the binding of IF-2 and IF-3 on the 30S subunit to which N-formylmethionyl-tRNA(fMet) subsequently binds. Helps modulate mRNA selection, yielding the 30S pre-initiation complex (PIC). Upon addition of the 50S ribosomal subunit IF-1, IF-2 and IF-3 are released leaving the mature 70S translation initiation complex. The protein is Translation initiation factor IF-1 1 of Paracidovorax citrulli (strain AAC00-1) (Acidovorax citrulli).